The following is a 348-amino-acid chain: Phospho-2-dehydro-3-deoxyheptonate aldolase, Trp-sensitive (348 aa).

Belongs to the class-I DAHP synthase family.

It carries out the reaction D-erythrose 4-phosphate + phosphoenolpyruvate + H2O = 7-phospho-2-dehydro-3-deoxy-D-arabino-heptonate + phosphate. It participates in metabolic intermediate biosynthesis; chorismate biosynthesis; chorismate from D-erythrose 4-phosphate and phosphoenolpyruvate: step 1/7. Functionally, stereospecific condensation of phosphoenolpyruvate (PEP) and D-erythrose-4-phosphate (E4P) giving rise to 3-deoxy-D-arabino-heptulosonate-7-phosphate (DAHP). In Escherichia coli O6:H1 (strain CFT073 / ATCC 700928 / UPEC), this protein is Phospho-2-dehydro-3-deoxyheptonate aldolase, Trp-sensitive (aroH).